Consider the following 628-residue polypeptide: Leucine-rich repeat and fibronectin type-III domain-containing protein 3 (628 aa).

The N-terminal stretch at M1–A16 is a signal peptide. Residues S17–M539 are Extracellular-facing. The LRRNT domain maps to P19–R59. LRR repeat units follow at residues R60 to T83, G84 to D105, A108 to G129, N132 to D153, T157 to R178, N181 to R202, and K205 to S226. A glycan (N-linked (GlcNAc...) asparagine) is linked at N81. Residues N249–P295 form the LRRCT domain. Residues P295–T382 enclose the Ig-like domain. C317 and C366 are disulfide-bonded. N339, N348, and N393 each carry an N-linked (GlcNAc...) asparagine glycan. Residues T382–G430 form a disordered region. A compositionally biased stretch (low complexity) spans D406–D422. A Fibronectin type-III domain is found at P425–A523. A glycan (N-linked (GlcNAc...) asparagine) is linked at N462. Residues I540 to M560 form a helical membrane-spanning segment. The Cytoplasmic portion of the chain corresponds to R561–P628.

It belongs to the LRFN family. As to quaternary structure, can form heteromeric complexes with LRFN1, LRFN2, LRFN4 and LRFN5. Able to form homomeric complexes across cell junctions, between adjacent cells. Does not interact with DLG4. N-glycosylated.

Its subcellular location is the cell membrane. The protein localises to the cell projection. It is found in the axon. The protein resides in the dendrite. It localises to the synapse. Its subcellular location is the presynaptic cell membrane. The protein localises to the postsynaptic cell membrane. Functionally, cell adhesion molecule that mediates homophilic cell-cell adhesion in a Ca(2+)-independent manner. Promotes neurite outgrowth in hippocampal neurons. This is Leucine-rich repeat and fibronectin type-III domain-containing protein 3 (LRFN3) from Homo sapiens (Human).